Reading from the N-terminus, the 98-residue chain is A-type ATP synthase subunit F (98 aa).

This sequence belongs to the V-ATPase F subunit family. In terms of assembly, the A-type ATPase is composed of subunits A(3), B(3), C, D, E(1 or 2), F, H(2), I and K(x).

It is found in the cell membrane. Functionally, component of the A-type ATP synthase that produces ATP from ADP in the presence of a proton gradient across the membrane. This is A-type ATP synthase subunit F from Methanocaldococcus jannaschii (strain ATCC 43067 / DSM 2661 / JAL-1 / JCM 10045 / NBRC 100440) (Methanococcus jannaschii).